The following is a 105-amino-acid chain: Dynein axonemal light chain 4 (105 aa).

Belongs to the dynein light chain family. As to quaternary structure, consists of at least two heavy chains and a number of intermediate and light chains.

The protein localises to the cytoplasm. Its subcellular location is the cytoskeleton. It localises to the cilium axoneme. In terms of biological role, force generating protein of respiratory cilia. Produces force towards the minus ends of microtubules. Dynein has ATPase activity. This Mus musculus (Mouse) protein is Dynein axonemal light chain 4 (Dnal4).